The chain runs to 1304 residues: MDQQEPSNNVDTSSILSDDGMETQEQSSFVTATIDLTVDDYDETEIQEILDNGKAEEGTDEDSDLVEGILNANSDVQALLDAPSEQVAQALNSFFGNESEQEAVAAQRRVDAEKTAKDEAELKQQEEAEDLIIEDSIVKTDEEKQAVRRLKINEFLSWFTRLLPEQFKNFEFTNPNYLTESISDSPVVNVDKCKEIVKSFKESESLEGLSQKYELIDEDVLVAAICIGVLDTNNEEDVDFNVLCDDRIDDWSIEKCVTFLDYPNTGLNSKNGPLRFMQFTVTSPASAILMLTLIRLREEGHPCRLDFDSNPTDDLLLNFDQVEFSNNIIDTAVKYWDDQKENGAQDKIGRELNDFFHEIESTSAEFKQHFENAVGSRNEIIQLVNEKIPDFDGTEAAVNESFTSDQRTEIINSRAIMETLKAEMKLAIAEAQKVYDTKTDFEKFFVLTVGDFCLARANPSDDAELTYAIVQDRVDAMTYKVKFIDTSQIRECNIRDLAMTTQGMYDPSLNTFGDVGLRVACRQVISSSQFGKKTIWLTGTAAGRRRAHRSDFLIFFDNGTDAYVSAPTMPGEPGYEVASEKKSVFSLKEMIAKMNAAQIAIMVGQPVGKEGNLDYFLTFHWIRQSHRSAYIRDFMKEFPEWPLLKMPVGMRICLYNSLVDRRKKMVTVIGTDRAFAIVRHEAPNPLAPGNRCTDFPCNDRNHQHIDEKIYRGSHRLEGAAHKKHMISTNNNLSQRRKDQLQSQFEPTDMIRSMPERNHQQVVKKKTTGTNQNVASTNDAKSKREIEIRKKNQFLFNKIIVPIPVLTPLENLKAHAQCGPDCLQKMDADPYEARFHRNSPIHTPLLCGWRRIMYTMSTGKKRGAVKKNIIYFSPCGAALHQISDVSEYIHVTRSLLTIDCFSFDARIDTATYITVDDKYLKVADFSLGTEGIPIPLVNSVDNDEPPSLEYSKRRFQYNDQVDISSVSRDFCSGCSCDGDCSDASKCECQQLSIEAMKRLPHNLQFDGHDELVPHYQNRLLSSKVISGLYECNDQCSCHRKSCYNRVVQNNIKYPMHIFKTAQSGWGVRALTDIPQSTFICTYVGAILTDDLADELRNADQYFADLDLKDTVELEKGREDHETDFGYGGDESDYDDEEGSDGDSGDDVMNKMVKRQDSSESGEETKRLTRQKRKQSKKSGKGGSVEKDDTTPRDSMEKDNIESKDEPVFNWDKYFEPFPLYVIDAKQRGNLGRFLNHSCDPNVHVQHVMYDTHDLRLPWVAFFTRKYVKAGDELTWDYQYTQDQTATTQLTCHCGAENCTGRLLKS.

Positions 1 to 16 (MDQQEPSNNVDTSSIL) are enriched in polar residues. Positions 1-31 (MDQQEPSNNVDTSSILSDDGMETQEQSSFVT) are disordered. Residues 97-129 (NESEQEAVAAQRRVDAEKTAKDEAELKQQEEAE) are a coiled coil. The 76-residue stretch at 834–909 (FHRNSPIHTP…FSFDARIDTA (76 aa)) folds into the MBD domain. A Pre-SET domain is found at 971 to 1049 (SGCSCDGDCS…SCYNRVVQNN (79 aa)). Cys-973, Cys-975, Cys-979, Cys-985, Cys-987, Cys-1030, Cys-1034, Cys-1036, and Cys-1041 together coordinate Zn(2+). The SET domain occupies 1052–1277 (YPMHIFKTAQ…AGDELTWDYQ (226 aa)). Residues 1062–1064 (SGW), Asp-1098, and Tyr-1100 each bind S-adenosyl-L-methionine. The span at 1113-1122 (EKGREDHETD) shows a compositional bias: basic and acidic residues. Positions 1113–1201 (EKGREDHETD…DSMEKDNIES (89 aa)) are disordered. A compositionally biased stretch (acidic residues) spans 1128-1144 (DESDYDDEEGSDGDSGD). A compositionally biased stretch (basic and acidic residues) spans 1152-1165 (KRQDSSESGEETKR). Basic residues predominate over residues 1166–1178 (LTRQKRKQSKKSG). Basic and acidic residues predominate over residues 1182-1201 (SVEKDDTTPRDSMEKDNIES). S-adenosyl-L-methionine is bound by residues Arg-1231 and 1234 to 1235 (NH). The Zn(2+) site is built by Cys-1237, Cys-1290, Cys-1292, and Cys-1297. In terms of domain architecture, Post-SET spans 1286-1302 (TQLTCHCGAENCTGRLL).

This sequence belongs to the class V-like SAM-binding methyltransferase superfamily.

It is found in the nucleus. It localises to the chromosome. The protein resides in the cytoplasm. It carries out the reaction N(6)-methyl-L-lysyl(9)-[histone H3] + S-adenosyl-L-methionine = N(6),N(6)-dimethyl-L-lysyl(9)-[histone H3] + S-adenosyl-L-homocysteine + H(+). The enzyme catalyses L-lysyl(9)-[histone H3] + S-adenosyl-L-methionine = N(6)-methyl-L-lysyl(9)-[histone H3] + S-adenosyl-L-homocysteine + H(+). Histone methyltransferase which is required for the mono- and dimethylation of 'Lys-9' of histone H3. This increases the efficiency of set-25-mediated trimethylation of histone H3 'Lys-9'. Involved in the transcriptional repression of lin-3 which is required for the negative regulation of vulval cell fate specification during postembryonic development. Has a role in blocking checkpoint signaling and mediating the transcriptional silencing of meiotic sex chromosome inactivation; a mechanism which enables checkpoint proteins to distinguish between the partnerless male X chromosome and asynapsed chromosomes thereby shielding the lone X from inappropriate activation of an apoptotic program. Operates redundantly with set-25 to position chromatin at the nuclear periphery. Required for small-RNA-induced H3K9 methylation. Together with set-25, protects and stabilizes repeat-rich genomic regions by suppressing transcription-induced replication stress through methylation of H3K9. Together with spr-5, required for transgenerational fertility. This chain is Histone-lysine N-methyltransferase met-2 (met-2), found in Caenorhabditis elegans.